A 154-amino-acid polypeptide reads, in one-letter code: UPF0756 membrane protein BPUM_2558 (154 aa).

4 helical membrane passes run 8–28 (FLVL…ILAV), 54–74 (WGVT…DIGF), 87–107 (WIAL…IVLL), and 117–137 (LVFG…GPLI).

Belongs to the UPF0756 family.

It localises to the cell membrane. The chain is UPF0756 membrane protein BPUM_2558 from Bacillus pumilus (strain SAFR-032).